The primary structure comprises 83 residues: U15-theraphotoxin-Cg1a (83 aa).

The signal sequence occupies residues 1 to 21 (MKAAILLAFAGLALLSVICHA). Positions 22-49 (SENVEQDSFEEVFSAIFAMEDDLKPKER) are excised as a propeptide. 3 disulfides stabilise this stretch: Cys51/Cys66, Cys58/Cys71, and Cys65/Cys77. Ala81 carries the alanine amide modification.

Belongs to the neurotoxin 10 (Hwtx-1) family. 66 (Jztx-24) subfamily. In terms of tissue distribution, expressed by the venom gland.

It localises to the secreted. Functionally, probable ion channel inhibitor. In Chilobrachys guangxiensis (Chinese earth tiger tarantula), this protein is U15-theraphotoxin-Cg1a.